A 204-amino-acid chain; its full sequence is Holliday junction branch migration complex subunit RuvA (204 aa).

A domain I region spans residues 1–64; it reads MIGHLTGRLV…EDAHLLFGFS (64 aa). The interval 65 to 143 is domain II; sequence QKTDRTLFRE…GIQQEDFFIE (79 aa). Residues 144 to 155 form a flexible linker region; that stretch reads SQHLKQPEHALN. Residues 156–204 are domain III; it reads EQDIPASEAISALIALGYKAAEAEKLVKKISKPALSSEQLIREALKAAL.

It belongs to the RuvA family. Homotetramer. Forms an RuvA(8)-RuvB(12)-Holliday junction (HJ) complex. HJ DNA is sandwiched between 2 RuvA tetramers; dsDNA enters through RuvA and exits via RuvB. An RuvB hexamer assembles on each DNA strand where it exits the tetramer. Each RuvB hexamer is contacted by two RuvA subunits (via domain III) on 2 adjacent RuvB subunits; this complex drives branch migration. In the full resolvosome a probable DNA-RuvA(4)-RuvB(12)-RuvC(2) complex forms which resolves the HJ.

It is found in the cytoplasm. Its function is as follows. The RuvA-RuvB-RuvC complex processes Holliday junction (HJ) DNA during genetic recombination and DNA repair, while the RuvA-RuvB complex plays an important role in the rescue of blocked DNA replication forks via replication fork reversal (RFR). RuvA specifically binds to HJ cruciform DNA, conferring on it an open structure. The RuvB hexamer acts as an ATP-dependent pump, pulling dsDNA into and through the RuvAB complex. HJ branch migration allows RuvC to scan DNA until it finds its consensus sequence, where it cleaves and resolves the cruciform DNA. The sequence is that of Holliday junction branch migration complex subunit RuvA from Pasteurella multocida (strain Pm70).